Consider the following 52-residue polypeptide: Rubredoxin (52 aa).

An N-formylmethionine; partial modification is found at Met1. The region spanning Met1 to Leu52 is the Rubredoxin-like domain. Fe cation is bound by residues Cys6, Cys9, Cys39, and Cys42.

It belongs to the rubredoxin family. The cofactor is Fe(3+). Post-translationally, observed in four forms, with and without iron, and with and without formylation at Met-1.

Rubredoxin is a small nonheme, iron protein lacking acid-labile sulfide. Its single Fe, chelated to 4 Cys, functions as an electron acceptor and may also stabilize the conformation of the molecule. The protein is Rubredoxin of Heliobacterium mobile (Heliobacillus mobilis).